The following is a 203-amino-acid chain: Pyridoxal 5'-phosphate synthase subunit PdxT (203 aa).

Position 51-53 (51-53 (GES)) interacts with L-glutamine. Catalysis depends on Cys-83, which acts as the Nucleophile. Residues Arg-110 and 137–138 (IR) contribute to the L-glutamine site. Residues His-172 and Glu-174 each act as charge relay system in the active site.

This sequence belongs to the glutaminase PdxT/SNO family. As to quaternary structure, in the presence of PdxS, forms a dodecamer of heterodimers. Only shows activity in the heterodimer.

It catalyses the reaction aldehydo-D-ribose 5-phosphate + D-glyceraldehyde 3-phosphate + L-glutamine = pyridoxal 5'-phosphate + L-glutamate + phosphate + 3 H2O + H(+). The catalysed reaction is L-glutamine + H2O = L-glutamate + NH4(+). It functions in the pathway cofactor biosynthesis; pyridoxal 5'-phosphate biosynthesis. Catalyzes the hydrolysis of glutamine to glutamate and ammonia as part of the biosynthesis of pyridoxal 5'-phosphate. The resulting ammonia molecule is channeled to the active site of PdxS. This Thermoplasma acidophilum (strain ATCC 25905 / DSM 1728 / JCM 9062 / NBRC 15155 / AMRC-C165) protein is Pyridoxal 5'-phosphate synthase subunit PdxT.